A 127-amino-acid polypeptide reads, in one-letter code: Mitochondrial pyruvate carrier 2 (127 aa).

Residues 2–40 (AAAGARGLRATYHRLMDKVELLLPKKLRPLYNHPAGPRT) lie on the Mitochondrial matrix side of the membrane. K26 bears the N6-acetyllysine mark. The chain crosses the membrane as a helical span at residues 41-61 (VFFWAPIMKWGLVCAGLADMA). Residues 62–72 (RPAEKLSTAQS) lie on the Mitochondrial intermembrane side of the membrane. Residues 73–90 (TVLMATGFIWSRYSLVII) form a helical membrane-spanning segment. The Mitochondrial matrix portion of the chain corresponds to 91–92 (PK). The chain crosses the membrane as a helical span at residues 93–115 (NWSLFAVNFFVGSAGASQLFRIW). Over 116-127 (RYNQELKSKGIQ) the chain is Mitochondrial intermembrane.

This sequence belongs to the mitochondrial pyruvate carrier (MPC) (TC 2.A.105) family. In terms of assembly, homodimer. Homooligomer. Forms heterodimers with MPC1 and MPC1L. The heterodimer is the more stable and dominant form.

The protein localises to the mitochondrion inner membrane. The enzyme catalyses pyruvate(out) + H(+)(out) = pyruvate(in) + H(+)(in). Its function is as follows. Mediates the uptake of pyruvate into mitochondria. The sequence is that of Mitochondrial pyruvate carrier 2 (Mpc2) from Mus musculus (Mouse).